The primary structure comprises 175 residues: Alpha-crystallin B chain (175 aa).

N-acetylmethionine is present on Met-1. 3 positions are modified to phosphoserine: Ser-19, Ser-45, and Ser-59. The sHSP domain maps to 56–164; the sequence is RAPSWIDTGL…PERTIPITRE (109 aa). Zn(2+) is bound at residue His-83. At Lys-92 the chain carries N6-acetyllysine. Zn(2+) is bound by residues His-104, Glu-106, His-111, and His-119. Residues 145-175 form a disordered region; the sequence is VNGPRKQVSGPERTIPITREEKPAVAAAPKK. Lys-166 carries the N6-acetyllysine modification.

It belongs to the small heat shock protein (HSP20) family. In terms of assembly, heteromer composed of three CRYAA and one CRYAB subunits. Aggregates with homologous proteins, including the small heat shock protein HSPB1, to form large heteromeric complexes. Inter-subunit bridging via zinc ions enhances stability, which is crucial as there is no protein turn over in the lens. Interacts with HSPBAP1. Interacts with TTN/titin. Interacts with TMEM109; in the cellular response to DNA damage. Interacts with DES; binds rapidly during early stages of DES filament assembly and a reduced binding seen in the later stages. Interacts with TMED10; the interaction mediates the translocation from the cytoplasm into the ERGIC (endoplasmic reticulum-Golgi intermediate compartment) and thereby secretion. Interacts with ATP6V1A and with MTOR, forming a ternary complex. In terms of tissue distribution, abundantly expressed in the lens of the eye. Expressed in ventricular cardiomyocytes of the heart. Also expressed in skeletal muscle and the kidney.

The protein resides in the cytoplasm. It localises to the cytosol. The protein localises to the nucleus. It is found in the secreted. Its subcellular location is the lysosome. Functionally, may contribute to the transparency and refractive index of the lens. Has chaperone-like activity, preventing aggregation of various proteins under a wide range of stress conditions. In lens epithelial cells, stabilizes the ATP6V1A protein, preventing its degradation by the proteasome. The chain is Alpha-crystallin B chain from Mus musculus (Mouse).